A 443-amino-acid polypeptide reads, in one-letter code: Xaa-Pro dipeptidase (443 aa).

Mn(2+)-binding residues include aspartate 246, aspartate 257, histidine 339, glutamate 384, and glutamate 423.

It belongs to the peptidase M24B family. Bacterial-type prolidase subfamily. It depends on Mn(2+) as a cofactor.

The enzyme catalyses Xaa-L-Pro dipeptide + H2O = an L-alpha-amino acid + L-proline. Its function is as follows. Splits dipeptides with a prolyl residue in the C-terminal position. This is Xaa-Pro dipeptidase from Escherichia coli O81 (strain ED1a).